Here is a 334-residue protein sequence, read N- to C-terminus: Dipeptide transport ATP-binding protein DppF (334 aa).

The 250-residue stretch at 13–262 folds into the ABC transporter domain; it reads LQAIDLKKHY…PRHPYTQALL (250 aa). Position 55–62 (55–62) interacts with ATP; the sequence is GESGCGKS.

This sequence belongs to the ABC transporter superfamily. The complex is composed of two ATP-binding proteins (DppD and DppF), two transmembrane proteins (DppB and DppC) and a solute-binding protein (DppA). MppA can replace DppA as binding protein for heme and ALA transport.

It localises to the cell inner membrane. It carries out the reaction a dipeptide(out) + ATP + H2O = a dipeptide(in) + ADP + phosphate + H(+). In terms of biological role, part of the ABC transporter DppABCDF involved in dipeptide transport. Responsible for energy coupling to the transport system. When a foreign outer membrane heme receptor is expressed in E.coli, DppABCDF can also transport heme and its precursor, 5-aminolevulinic acid (ALA), from the periplasm into the cytoplasm. This is Dipeptide transport ATP-binding protein DppF (dppF) from Escherichia coli (strain K12).